A 677-amino-acid chain; its full sequence is Methionine--tRNA ligase (677 aa).

The 'HIGH' region signature appears at P15 to H25. Residues C146, C149, C159, and C162 each contribute to the Zn(2+) site. The 'KMSKS' region motif lies at K333–S337. K336 provides a ligand contact to ATP. A tRNA-binding domain is found at D575–K677.

The protein belongs to the class-I aminoacyl-tRNA synthetase family. MetG type 1 subfamily. As to quaternary structure, homodimer. Requires Zn(2+) as cofactor.

The protein resides in the cytoplasm. The catalysed reaction is tRNA(Met) + L-methionine + ATP = L-methionyl-tRNA(Met) + AMP + diphosphate. Functionally, is required not only for elongation of protein synthesis but also for the initiation of all mRNA translation through initiator tRNA(fMet) aminoacylation. The protein is Methionine--tRNA ligase of Salmonella paratyphi C (strain RKS4594).